The primary structure comprises 4246 residues: Intermembrane lipid transfer protein vps13F (4246 aa).

The 112-residue stretch at 2 to 113 folds into the Chorein N-terminal domain; that stretch reads FESIVSNLLT…LLLQKKLKKL (112 aa). Disordered stretches follow at residues 141–271, 401–420, 591–759, 914–944, 964–1014, 1217–1251, 1356–1379, 1395–1436, 1622–1683, 2101–2131, 2211–2237, 2471–2513, 2704–2756, 3421–3449, 3611–3652, and 3794–3813; these read IKEK…EDED, PKKSSPSTTTTTPPISPPPK, KAED…SILG, VSSSPSPVSSPSRDKRLEEETKQEDEKEKKL, KKSK…TNDE, QAQQQAQQQQQSQHPSSNDDNSSSNGGCSVDIKSP, ISTHFSSKKNAEDENNNSNLDRVD, YNGV…KSKK, REKR…KSQS, LESLHDHKSSSSSSSSSPPPPPPPSSSQQQQ, HHSKEKNQQSADGSGLSPPLSKDEKEK, QQQH…KSKQ, LSTS…QTTK, IDDDQDSDSDSGSSNSSSPSISSSSTSPL, KTLN…NNQN, and NNNNNQNNNNQNNDFNNIDE. The segment covering 168–201 has biased composition (low complexity); the sequence is NASPVNSNNNNNNNSNLVSESNIPSSSSSSSSSL. Over residues 207–217 the composition is skewed to basic and acidic residues; that stretch reads NSSKDANKSDD. A compositionally biased stretch (acidic residues) spans 218-271; it reads TDMDVDDDDEFQEATEGDYDNEEEQDDHDEEDDLSDDDDDDDDEEDDYEMEDED. Low complexity-rich tracts occupy residues 401–413 and 597–658; these read PKKSSPSTTTTTP and QQQQ…SNST. A compositionally biased stretch (basic and acidic residues) spans 659 to 668; it reads DSKDIMKSSG. The span at 669–680 shows a compositional bias: low complexity; sequence DKNVNNNNNMGD. The segment covering 681–702 has biased composition (basic and acidic residues); the sequence is NENKDNIDKKEENKNDDQDNKN. 2 stretches are compositionally biased toward low complexity: residues 725–747 and 914–924; these read SGGWFKWFGWGSSNKSKQQQQQQ and VSSSPSPVSSP. 2 stretches are compositionally biased toward basic and acidic residues: residues 925–944 and 987–1001; these read SRDKRLEEETKQEDEKEKKL and DKYSTKGTTESREES. Residues 1217–1241 show a composition bias toward low complexity; sequence QAQQQAQQQQQSQHPSSNDDNSSSN. Positions 1400 to 1409 are enriched in acidic residues; that stretch reads SDDDNNDDEN. Basic and acidic residues-rich tracts occupy residues 1410-1431 and 1622-1634; these read DKTTQDDQDDKEKSSGNDDSLK and REKRKRLEKDKDN. A compositionally biased stretch (low complexity) spans 1644–1670; that stretch reads QQSIPQKQQQQQQQQQQQQQQQQQQQQ. 5 stretches are compositionally biased toward low complexity: residues 2471–2506, 2705–2755, 3430–3449, 3613–3652, and 3794–3809; these read QQQHQQQNNNSNNNNNNNNNNNNNNNNNNNNNNNNN, STST…TQTT, DSGSSNSSSPSISSSSTSPL, LNNNNNNNNNNNNNNLNSVTKDNNNNNNQNNNNQNNNNQN, and NNNNNQNNNNQNNDFN.

This sequence belongs to the VPS13 family.

The protein resides in the membrane. Functionally, mediates the transfer of lipids between membranes at organelle contact sites. This Dictyostelium discoideum (Social amoeba) protein is Intermembrane lipid transfer protein vps13F (vps13F).